We begin with the raw amino-acid sequence, 397 residues long: S-adenosylmethionine synthase (397 aa).

His-15 is an ATP binding site. Asp-17 provides a ligand contact to Mg(2+). Glu-43 contacts K(+). Residues Glu-56 and Gln-99 each coordinate L-methionine. A flexible loop region spans residues 99-109 (QSPDIAMGVNK). Residues 175-177 (DGK), 241-242 (RF), Asp-250, 256-257 (RK), Ala-273, and Lys-277 each bind ATP. Asp-250 provides a ligand contact to L-methionine. L-methionine is bound at residue Lys-281.

The protein belongs to the AdoMet synthase family. In terms of assembly, homotetramer; dimer of dimers. Mg(2+) is required as a cofactor. It depends on K(+) as a cofactor.

The protein localises to the cytoplasm. The enzyme catalyses L-methionine + ATP + H2O = S-adenosyl-L-methionine + phosphate + diphosphate. The protein operates within amino-acid biosynthesis; S-adenosyl-L-methionine biosynthesis; S-adenosyl-L-methionine from L-methionine: step 1/1. In terms of biological role, catalyzes the formation of S-adenosylmethionine (AdoMet) from methionine and ATP. The overall synthetic reaction is composed of two sequential steps, AdoMet formation and the subsequent tripolyphosphate hydrolysis which occurs prior to release of AdoMet from the enzyme. The chain is S-adenosylmethionine synthase from Acetivibrio thermocellus (strain ATCC 27405 / DSM 1237 / JCM 9322 / NBRC 103400 / NCIMB 10682 / NRRL B-4536 / VPI 7372) (Clostridium thermocellum).